An 83-amino-acid chain; its full sequence is Large ribosomal subunit protein eL14 (83 aa).

The protein belongs to the eukaryotic ribosomal protein eL14 family.

The chain is Large ribosomal subunit protein eL14 from Thermococcus onnurineus (strain NA1).